A 199-amino-acid chain; its full sequence is uncharacterized protein (199 aa).

A signal peptide spans 1-23 (MSARAPKELRLALPPCLLNRTFA). 2 N-linked (GlcNAc...) asparagine glycosylation sites follow: asparagine 19 and asparagine 26. The Extracellular portion of the chain corresponds to 24-60 (SHNASGGSSAGLRSSGAGGGTCITQVGQQLFQSFSST). The chain crosses the membrane as a helical span at residues 61 to 81 (LVLIVLVTLIFCLLVLSLSTF). Topologically, residues 82–199 (HIHKRRMKKR…EGLLQTVVLS (118 aa)) are cytoplasmic. The segment at 93–190 (MQRAQEEYER…ASSCLDTPGE (98 aa)) is disordered. 2 stretches are compositionally biased toward basic and acidic residues: residues 95–106 (RAQEEYERDHCS) and 124–135 (HGKETRLERQPR). Low complexity predominate over residues 147 to 163 (SSSSSSSSSPGLLCQGP). The segment covering 164 to 176 (CAPPPPLPAPTPQ) has biased composition (pro residues).

It localises to the membrane. This is an uncharacterized protein from Mus musculus (Mouse).